Here is a 228-residue protein sequence, read N- to C-terminus: UPF0758 protein RALTA_A2508 (228 aa).

Positions Gly102–Arg224 constitute an MPN domain. Zn(2+) is bound by residues His173, His175, and Asp186. Residues His173–Asp186 carry the JAMM motif motif.

It belongs to the UPF0758 family.

This chain is UPF0758 protein RALTA_A2508, found in Cupriavidus taiwanensis (strain DSM 17343 / BCRC 17206 / CCUG 44338 / CIP 107171 / LMG 19424 / R1) (Ralstonia taiwanensis (strain LMG 19424)).